The chain runs to 239 residues: Ribonuclease PH (239 aa).

Phosphate contacts are provided by residues Arg87 and 125–127 (GTR).

The protein belongs to the RNase PH family. As to quaternary structure, homohexameric ring arranged as a trimer of dimers.

It carries out the reaction tRNA(n+1) + phosphate = tRNA(n) + a ribonucleoside 5'-diphosphate. Functionally, phosphorolytic 3'-5' exoribonuclease that plays an important role in tRNA 3'-end maturation. Removes nucleotide residues following the 3'-CCA terminus of tRNAs; can also add nucleotides to the ends of RNA molecules by using nucleoside diphosphates as substrates, but this may not be physiologically important. Probably plays a role in initiation of 16S rRNA degradation (leading to ribosome degradation) during starvation. This chain is Ribonuclease PH, found in Pseudomonas paraeruginosa (strain DSM 24068 / PA7) (Pseudomonas aeruginosa (strain PA7)).